Here is an 881-residue protein sequence, read N- to C-terminus: Phosphoenolpyruvate carboxylase (881 aa).

Catalysis depends on residues His138 and Lys545.

Belongs to the PEPCase type 1 family. Requires Mg(2+) as cofactor.

The catalysed reaction is oxaloacetate + phosphate = phosphoenolpyruvate + hydrogencarbonate. In terms of biological role, forms oxaloacetate, a four-carbon dicarboxylic acid source for the tricarboxylic acid cycle. In Shewanella oneidensis (strain ATCC 700550 / JCM 31522 / CIP 106686 / LMG 19005 / NCIMB 14063 / MR-1), this protein is Phosphoenolpyruvate carboxylase.